The chain runs to 59 residues: Small ribosomal subunit protein bS21 (59 aa).

Positions 32–42 (VRKREHYDKPS) are enriched in basic and acidic residues. A disordered region spans residues 32-59 (VRKREHYDKPSVKRKKKAEAARRKNAKK). A compositionally biased stretch (basic residues) spans 43-59 (VKRKKKAEAARRKNAKK).

It belongs to the bacterial ribosomal protein bS21 family.

This Clostridioides difficile (strain 630) (Peptoclostridium difficile) protein is Small ribosomal subunit protein bS21.